The following is a 306-amino-acid chain: tRNA dimethylallyltransferase (306 aa).

9 to 16 (GPTAIGKT) provides a ligand contact to ATP. 11 to 16 (TAIGKT) contributes to the substrate binding site. Positions 34–37 (DSMQ) are interaction with substrate tRNA.

It belongs to the IPP transferase family. As to quaternary structure, monomer. The cofactor is Mg(2+).

It catalyses the reaction adenosine(37) in tRNA + dimethylallyl diphosphate = N(6)-dimethylallyladenosine(37) in tRNA + diphosphate. In terms of biological role, catalyzes the transfer of a dimethylallyl group onto the adenine at position 37 in tRNAs that read codons beginning with uridine, leading to the formation of N6-(dimethylallyl)adenosine (i(6)A). The chain is tRNA dimethylallyltransferase from Lactobacillus helveticus (strain DPC 4571).